A 440-amino-acid chain; its full sequence is MKMTGWKKKLCRGHHLWALGCYMLLAVVALRLSLRLKCDVDSLDLESRDFQSQRCRDVLYKNLKLPAKRSINCSGITRGDQEAVVQALLDNLEVKKKRLPFTDTYYLNITRDCEQFKAQRKFIQFPLSKEELDFPIAYSMVVHEKIENFERLLRAVYAPQNIYCVHVDVKSPETFKEAVKAIISCFPNVFMASKLVPVVYASWSRVQADLNCMEDLLQSSVPWKYLLNTCGTDFPIKTNAEMVLALKMLNGKNSMESEIPSEYKKNRWKYRYEVTDRLYLTSKMKDPPPDNLPMFTGNAYFVASRAFVQHVLENPKSQRLIEWVKDTYSPDEHLWATLQRAPWMPGSVPYHPKYHISDMTAIARLVKWQGHEGDVSMGAPYAPCSGIHQRAICIYGAGDLHWILQNHHLLANKFDPRVDDNVLQCLEEYLRHKAIYGTEL.

Residues methionine 1–arginine 12 lie on the Cytoplasmic side of the membrane. Residues glycine 13–leucine 30 traverse the membrane as a helical; Signal-anchor for type II membrane protein segment. Residues arginine 31 to leucine 440 lie on the Lumenal side of the membrane. N-linked (GlcNAc...) asparagine glycans are attached at residues asparagine 72 and asparagine 108. 4 disulfides stabilise this stretch: cysteine 73–cysteine 230, cysteine 164–cysteine 384, cysteine 185–cysteine 212, and cysteine 393–cysteine 425.

Belongs to the glycosyltransferase 14 family. In terms of processing, N-glycosylated. In terms of tissue distribution, primarily expressed in mucus-secreting tissues.

It localises to the golgi apparatus membrane. The enzyme catalyses a 3-O-[beta-D-galactosyl-(1-&gt;3)-N-acetyl-alpha-D-galactosaminyl]-L-seryl-[protein] + UDP-N-acetyl-alpha-D-glucosamine = 3-O-{beta-D-galactosyl-(1-&gt;3)-[N-acetyl-beta-D-glucosaminyl-(1-&gt;6)]-N-acetyl-alpha-D-galactosaminyl}-L-seryl-[protein] + UDP + H(+). It catalyses the reaction a 3-O-[beta-D-galactosyl-(1-&gt;3)-N-acetyl-alpha-D-galactosaminyl]-L-threonyl-[protein] + UDP-N-acetyl-alpha-D-glucosamine = a 3-O-{beta-D-galactosyl-(1-&gt;3)-[N-acetyl-beta-D-glucosaminyl-(1-&gt;6)]-N-acetyl-alpha-D-galactosaminyl}-L-threonyl-[protein] + UDP + H(+). The catalysed reaction is a beta-D-Gal-(1-&gt;4)-beta-D-GlcNAc-(1-&gt;3)-beta-D-Gal-(1-&gt;4)-beta-D-GlcNAc derivative + UDP-N-acetyl-alpha-D-glucosamine = a beta-D-Gal-(1-&gt;4)-beta-D-GlcNAc-(1-&gt;3)-[beta-D-GlcNAc-(1-&gt;6)]-beta-D-Gal-(1-&gt;4)-N-acetyl-beta-D-glucosaminyl derivative + UDP + H(+). It carries out the reaction 3-O-[N-acetyl-beta-D-glucosaminyl-(1-&gt;3)-N-acetyl-alpha-D-galactosaminyl]-L-seryl-[protein] + UDP-N-acetyl-alpha-D-glucosamine = 3-O-[N-acetyl-beta-D-glucosaminyl-(1-&gt;3)-[N-acetyl-beta-D-glucosaminyl-(1-&gt;6)]-N-acetyl-alpha-D-galactosaminyl]-L-seryl-[protein] + UDP + H(+). The enzyme catalyses a 3-O-[N-acetyl-beta-D-glucosaminyl-(1-&gt;3)-N-acetyl-alpha-D-galactosaminyl]-L-threonyl-[protein] + UDP-N-acetyl-alpha-D-glucosamine = 3-O-[N-acetyl-beta-D-glucosaminyl-(1-&gt;3)-[N-acetyl-beta-D-glucosaminyl-(1-&gt;6)]-N-acetyl-alpha-D-galactosaminyl]-L-threonyl-[protein] + UDP + H(+). Its pathway is protein modification; protein glycosylation. In terms of biological role, glycosyltransferase that can synthesize all known mucin beta 6 N-acetylglucosaminides. Mediates core 2 and core 4 O-glycan branching, 2 important steps in mucin-type biosynthesis. Also has I-branching enzyme activity by converting linear into branched poly-N-acetyllactosaminoglycans, leading to introduce the blood group I antigen during embryonic development. This chain is Beta-1,3-galactosyl-O-glycosyl-glycoprotein beta-1,6-N-acetylglucosaminyltransferase 3 (GCNT3), found in Bos taurus (Bovine).